The following is an 872-amino-acid chain: DNA mismatch repair protein MutS (872 aa).

G602–S609 contacts ATP.

This sequence belongs to the DNA mismatch repair MutS family.

This protein is involved in the repair of mismatches in DNA. It is possible that it carries out the mismatch recognition step. This protein has a weak ATPase activity. The polypeptide is DNA mismatch repair protein MutS (Staphylococcus aureus (strain bovine RF122 / ET3-1)).